The chain runs to 918 residues: MKTIKKTLLAAAIASFFSSGLYAQTPIDLGVVNEDKLIEMLVRTGQIPADASDVDKRIALERYLEEKIRSGFKGDAQFGKKALEQRAKILKVIDKQKGPHKARVFALDVGQKRTDKVLALLIDFPDLPWDDNRLTKEHTEMLYDRYEPSHYQDLLFSDKGYTGPNGENFISMRQYYESESGNSYSVSGQAAGWYRASKNAAYYGGNSPGTNNDMNARELVREALDQLARDPNINLADYDIEDRYDYNGNGNFREPDGVIDHLMIFHASVGEEAGGGVLGADAIWSHRFNLGRYHVLEGTKSNVPGRFNGQFAAFDYTIQPIDAAAGVCAHEYGHDLGLPDEYDTQYTGTGEPVSYWSIMSSGSWAGKIGGTQPTAFSSWAKQFLQNSIGGRWINHEQLSINELEAKPRVVTLFQTTDNSRPNMVKVTLPMKRVEGIKPAEGEFSFYSNRGDDLKNRMSRPLTIPAGSQATLRFKAWFQIEKDYDYARVLINGKPIAGNITTMDDPFKSGLVPAISGQSDGWVDAQFDLSAWAGQTVELAFDYLTDGGLAMEGLYVDDLRLEVDGNQTLIDNAEGTSSFAFQGFTKNGGFHEANHYYLLQWRSHNDVDQGLANLKRFGQLMSFEPGLLVWYVDESYADNWVGKHPGEGWLGVVDADQNALVWSKTGEVAQTRFQVRDATFSLFDQAPLKLVTADGNTLEDMNLTANASFSDDQDYSSPQAPDSGRKVMPFGLKIDLLSQSKENEYGVVRLSKVTTENIAPVARFELKVEGLSVMSQNTSSDSDGNIVSYLWDFGNGQTSTEAAPTWSYTKAGSYSVTLTVTDDKGDSDTHQQTIKVDTPNALPQASANYIHLGRWVTMWSTSTDSDGRIVDTEWTLPNGKIKRGRMFTAIFPSYGHHDVQLKVMDDRGAVTTITIKVKL.

The signal sequence occupies residues 1–23 (MKTIKKTLLAAAIASFFSSGLYA). A propeptide spanning residues 24–105 (QTPIDLGVVN…QKGPHKARVF (82 aa)) is cleaved from the precursor. His330 contacts Zn(2+). Glu331 is a catalytic residue. Residue His334 participates in Zn(2+) binding. Positions 757, 782, 821, and 825 each coordinate Ca(2+). PKD domains follow at residues 758–835 (APVA…TIKV) and 855–918 (VTMW…KVKL). Positions 835 to 918 (VDTPNALPQA…VTTITIKVKL (84 aa)) are excised as a propeptide.

Belongs to the peptidase M6 family. Zn(2+) is required as a cofactor. In terms of processing, prtV is expressed as an inactive, multidomain, 102 kDa pre-pro-metalloprotease. To form a catalytically active protease, PrtV is first secreted, and then it undergoes N- and C-terminal cleavages during envelope translocation to yield a 81 kDa pro-metalloprotease. Outside the cell, the 81 kDa pro-metalloprotease undergoes an auto-cleavage. The two major products of autoproteolysis (37 kDa and 18 kDa) together form the so called 55 kDa active complex.

It localises to the secreted. Calcium plays an important structural role, providing stability to this protein in the cytoplasm. Outside the cell, the decrease of the calcium concentration triggers the autoproteolysis. PrtV activity is increased by 25 mM of Sr(2+) or Mg(2+) and to some extent by Ba(2+); however, Ba(2+) inhibits PrtV at higher concentrations. Completely inhibited by EDTA and 1,10-phenanthroline. Metalloprotease that exhibits a cytotoxic effect leading to cell death. In host tissues, it could play a role in pathogenesis by modulating the stability of the extracellular matrix components such as fibronectin and fibrinogen. Also able to cleave plasminogen. This is Pre-pro-metalloprotease PrtV from Vibrio cholerae serotype O1 (strain ATCC 39315 / El Tor Inaba N16961).